Reading from the N-terminus, the 145-residue chain is Histone H2B.10 (145 aa).

The segment covering 1–15 has biased composition (basic and acidic residues); that stretch reads MAKADKKPAEKKPAE. The tract at residues 1 to 53 is disordered; it reads MAKADKKPAEKKPAEKTPAAEPAAAAEKKPKAGKKLPKEPAGAGDKKKKRSKK. Lys-3 carries the post-translational modification N6-methyllysine. An N6-acetyllysine mark is found at Lys-6 and Lys-11. Position 12 is an N6,N6-dimethyllysine (Lys-12). Residues Lys-16, Lys-28, and Lys-34 each carry the N6-acetyllysine modification. Positions 16–25 are enriched in low complexity; the sequence is KTPAAEPAAA. The residue at position 35 (Lys-35) is an N6-acetyllysine; partial. Residue Lys-141 forms a Glycyl lysine isopeptide (Lys-Gly) (interchain with G-Cter in ubiquitin) linkage.

Belongs to the histone H2B family. The nucleosome is a histone octamer containing two molecules each of H2A, H2B, H3 and H4 assembled in one H3-H4 heterotetramer and two H2A-H2B heterodimers. The octamer wraps approximately 147 bp of DNA. Interacts with ORTH2. Can be acetylated to form H2BK5ac, H2BK10ac, H2BK15ac, H2BK27ac, H2BK33ac and H2BK34ac. Post-translationally, dimethylated to form H2BK11me2. In terms of processing, monoubiquitinated by BRE1 to form H2BK143ub1 and deubiquitinated by UBP26. Required for heterochromatic histone H3 di- and trimethylation at H3K4me. May give a specific tag for epigenetic transcriptional activation.

It localises to the nucleus. Its subcellular location is the chromosome. Functionally, core component of nucleosome. Nucleosomes wrap and compact DNA into chromatin, limiting DNA accessibility to the cellular machineries which require DNA as a template. Histones thereby play a central role in transcription regulation, DNA repair, DNA replication and chromosomal stability. DNA accessibility is regulated via a complex set of post-translational modifications of histones, also called histone code, and nucleosome remodeling. In Arabidopsis thaliana (Mouse-ear cress), this protein is Histone H2B.10.